A 118-amino-acid chain; its full sequence is Nucleoid-associated protein TM_0687 (118 aa).

It belongs to the YbaB/EbfC family. As to quaternary structure, homodimer.

It is found in the cytoplasm. The protein resides in the nucleoid. In terms of biological role, binds to DNA and alters its conformation. May be involved in regulation of gene expression, nucleoid organization and DNA protection. The chain is Nucleoid-associated protein TM_0687 from Thermotoga maritima (strain ATCC 43589 / DSM 3109 / JCM 10099 / NBRC 100826 / MSB8).